The following is a 605-amino-acid chain: Elongation factor 4 (605 aa).

Residues 5–187 (ALIRNFSIIA…AVVERIPPPK (183 aa)) form the tr-type G domain. Residues 17–22 (DHGKST) and 134–137 (NKID) each bind GTP.

This sequence belongs to the TRAFAC class translation factor GTPase superfamily. Classic translation factor GTPase family. LepA subfamily.

It localises to the cell inner membrane. The catalysed reaction is GTP + H2O = GDP + phosphate + H(+). In terms of biological role, required for accurate and efficient protein synthesis under certain stress conditions. May act as a fidelity factor of the translation reaction, by catalyzing a one-codon backward translocation of tRNAs on improperly translocated ribosomes. Back-translocation proceeds from a post-translocation (POST) complex to a pre-translocation (PRE) complex, thus giving elongation factor G a second chance to translocate the tRNAs correctly. Binds to ribosomes in a GTP-dependent manner. The chain is Elongation factor 4 from Novosphingobium aromaticivorans (strain ATCC 700278 / DSM 12444 / CCUG 56034 / CIP 105152 / NBRC 16084 / F199).